Here is a 1172-residue protein sequence, read N- to C-terminus: Structural maintenance of chromosomes protein 2 (1172 aa).

32–39 (GLNGSGKS) contacts ATP. Coiled-coil stretches lie at residues 172–204 (RMFE…EEIE) and 258–507 (SHIA…AYME). The SMC hinge domain maps to 520-640 (SKVKGLVAQL…CDTPESAKKV (121 aa)). The stretch at 676 to 941 (LLQIQKLNSL…INHLEKENDW (266 aa)) forms a coiled coil.

It belongs to the SMC family. SMC2 subfamily. Forms a heterodimer with cut3/smc4. Component of the condensin complex, which contains the cut3 and cut14 heterodimer, and three non smc subunits that probably regulate the complex: cnd1, cnd2 and cnd3.

The protein localises to the nucleus. It is found in the cytoplasm. The protein resides in the chromosome. In terms of biological role, central component of the condensin complex, a complex required for conversion of interphase chromatin into mitotic-like condense chromosomes. The condensin complex probably introduces positive supercoils into relaxed DNA in the presence of type I topoisomerases and converts nicked DNA into positive knotted forms in the presence of type II topoisomerases. This chain is Structural maintenance of chromosomes protein 2 (cut14), found in Schizosaccharomyces pombe (strain 972 / ATCC 24843) (Fission yeast).